The chain runs to 103 residues: uncharacterized protein (103 aa).

The first 22 residues, M1–A22, serve as a signal peptide directing secretion.

To the N-terminal of the FimA/PapA family of fimbria proteins.

This is an uncharacterized protein from Escherichia coli (strain K12).